Reading from the N-terminus, the 62-residue chain is Temporin-1PLa (62 aa).

Positions 1–22 (MFTSKKSLLLLFFLGTINLSLC) are cleaved as a signal peptide. Positions 23-45 (EEERDADEEERRDDPDEMNVEVE) are excised as a propeptide. An Isoleucine amide modification is found at Ile-60.

As to expression, expressed by the skin glands.

It is found in the secreted. Antimicrobial activity against the Gram-positive bacterium S.aureus. In Lithobates palustris (Pickerel frog), this protein is Temporin-1PLa.